We begin with the raw amino-acid sequence, 196 residues long: Ribosome maturation factor RimP (196 aa).

Positions 164-196 (LAPQKPNKPGPKKPGHEKKKPSNESAAGKPRAE) are disordered. Over residues 173 to 182 (GPKKPGHEKK) the composition is skewed to basic residues.

It belongs to the RimP family.

Its subcellular location is the cytoplasm. Functionally, required for maturation of 30S ribosomal subunits. The sequence is that of Ribosome maturation factor RimP from Xanthomonas axonopodis pv. citri (strain 306).